The following is a 77-amino-acid chain: Translation initiation factor IF-1, chloroplastic (77 aa).

Positions 1 to 71 (MKEQKLIHEG…TRGRIIYRLR (71 aa)) constitute an S1-like domain.

The protein belongs to the IF-1 family. In terms of assembly, component of the 30S ribosomal translation pre-initiation complex which assembles on the 30S ribosome in the order IF-2 and IF-3, IF-1 and N-formylmethionyl-tRNA(fMet); mRNA recruitment can occur at any time during PIC assembly.

The protein resides in the plastid. The protein localises to the chloroplast. In terms of biological role, one of the essential components for the initiation of protein synthesis. Stabilizes the binding of IF-2 and IF-3 on the 30S subunit to which N-formylmethionyl-tRNA(fMet) subsequently binds. Helps modulate mRNA selection, yielding the 30S pre-initiation complex (PIC). Upon addition of the 50S ribosomal subunit IF-1, IF-2 and IF-3 are released leaving the mature 70S translation initiation complex. This Cabomba caroliniana (Carolina fanwort) protein is Translation initiation factor IF-1, chloroplastic.